The chain runs to 58 residues: Large ribosomal subunit protein uL30 (58 aa).

This sequence belongs to the universal ribosomal protein uL30 family. In terms of assembly, part of the 50S ribosomal subunit.

This chain is Large ribosomal subunit protein uL30, found in Cytophaga hutchinsonii (strain ATCC 33406 / DSM 1761 / CIP 103989 / NBRC 15051 / NCIMB 9469 / D465).